A 67-amino-acid polypeptide reads, in one-letter code: Large ribosomal subunit protein uL29 (67 aa).

It belongs to the universal ribosomal protein uL29 family.

The polypeptide is Large ribosomal subunit protein uL29 (Halorhodospira halophila (strain DSM 244 / SL1) (Ectothiorhodospira halophila (strain DSM 244 / SL1))).